A 218-amino-acid polypeptide reads, in one-letter code: MNFAIFAFLSFISGSIPFGYWIALRFGKMDIRKFGSKNIGATNVGRSIGWKFGFPVLVLDVAKGIFPVYLSGIYIPEGGVPFQLACGVLAVLGHMFSPFLGFKGGKGVATTLGVFLVLTPIACFGAIFVFLVTIKYFKFVSIGSIFASLTLPLVYAFSSILLLHEEVSYWILGTMVFISIGIILTHRENIFRILNRSELFAVKNEDEERNGDSERNRR.

Helical transmembrane passes span 3–23 (FAIFAFLSFISGSIPFGYWIA), 53–73 (GFPVLVLDVAKGIFPVYLSGI), 82–102 (FQLACGVLAVLGHMFSPFLGF), 112–132 (LGVFLVLTPIACFGAIFVFLV), 142–162 (IGSIFASLTLPLVYAFSSILL), and 166–186 (EVSYWILGTMVFISIGIILTH).

It belongs to the PlsY family. In terms of assembly, probably interacts with PlsX.

The protein localises to the cell inner membrane. The catalysed reaction is an acyl phosphate + sn-glycerol 3-phosphate = a 1-acyl-sn-glycero-3-phosphate + phosphate. It functions in the pathway lipid metabolism; phospholipid metabolism. In terms of biological role, catalyzes the transfer of an acyl group from acyl-phosphate (acyl-PO(4)) to glycerol-3-phosphate (G3P) to form lysophosphatidic acid (LPA). This enzyme utilizes acyl-phosphate as fatty acyl donor, but not acyl-CoA or acyl-ACP. The protein is Glycerol-3-phosphate acyltransferase of Leptospira borgpetersenii serovar Hardjo-bovis (strain JB197).